Consider the following 90-residue polypeptide: Sec-independent protein translocase protein TatA (90 aa).

The chain crosses the membrane as a helical span at residues 1–21 (MGLPGGWELVLIVGVLVLLFG). The span at 42–60 (EARGMKEDEEAAKREKQAK) shows a compositional bias: basic and acidic residues. Residues 42–90 (EARGMKEDEEAAKREKQAKSEPQQLTAGESSAPTVASPVEETQRNDSKK) are disordered. Polar residues predominate over residues 61 to 75 (SEPQQLTAGESSAPT).

Belongs to the TatA/E family. The Tat system comprises two distinct complexes: a TatABC complex, containing multiple copies of TatA, TatB and TatC subunits, and a separate TatA complex, containing only TatA subunits. Substrates initially bind to the TatABC complex, which probably triggers association of the separate TatA complex to form the active translocon.

It localises to the cell membrane. In terms of biological role, part of the twin-arginine translocation (Tat) system that transports large folded proteins containing a characteristic twin-arginine motif in their signal peptide across membranes. TatA could form the protein-conducting channel of the Tat system. The polypeptide is Sec-independent protein translocase protein TatA (Saccharopolyspora erythraea (strain ATCC 11635 / DSM 40517 / JCM 4748 / NBRC 13426 / NCIMB 8594 / NRRL 2338)).